The following is an 82-amino-acid chain: Cytochrome c-551 (82 aa).

Cysteine 12, cysteine 15, histidine 16, and methionine 61 together coordinate heme c.

In terms of processing, binds 1 heme c group covalently per subunit.

The polypeptide is Cytochrome c-551 (Azotobacter vinelandii).